We begin with the raw amino-acid sequence, 125 residues long: Glycine cleavage system H protein (125 aa).

Residues 23–105 form the Lipoyl-binding domain; sequence VSTVGITEHA…FEGGWLFKVR (83 aa). An N6-lipoyllysine modification is found at lysine 64.

Belongs to the GcvH family. The glycine cleavage system is composed of four proteins: P, T, L and H. (R)-lipoate is required as a cofactor.

Its function is as follows. The glycine cleavage system catalyzes the degradation of glycine. The H protein shuttles the methylamine group of glycine from the P protein to the T protein. In Streptomyces avermitilis (strain ATCC 31267 / DSM 46492 / JCM 5070 / NBRC 14893 / NCIMB 12804 / NRRL 8165 / MA-4680), this protein is Glycine cleavage system H protein.